The following is a 536-amino-acid chain: Glutamyl-tRNA(Gln) amidotransferase subunit B, mitochondrial (536 aa).

The N-terminal 8 residues, 1–8 (MLRVHRLY), are a transit peptide targeting the mitochondrion.

The protein belongs to the GatB/GatE family. GatB subfamily. As to quaternary structure, subunit of the heterotrimeric GatFAB amidotransferase (AdT) complex, composed of A, B and F subunits.

It localises to the mitochondrion. The catalysed reaction is L-glutamyl-tRNA(Gln) + L-glutamine + ATP + H2O = L-glutaminyl-tRNA(Gln) + L-glutamate + ADP + phosphate + H(+). Its function is as follows. Allows the formation of correctly charged Gln-tRNA(Gln) through the transamidation of misacylated Glu-tRNA(Gln) in the mitochondria. The reaction takes place in the presence of glutamine and ATP through an activated gamma-phospho-Glu-tRNA(Gln). The chain is Glutamyl-tRNA(Gln) amidotransferase subunit B, mitochondrial from Eremothecium gossypii (strain ATCC 10895 / CBS 109.51 / FGSC 9923 / NRRL Y-1056) (Yeast).